The primary structure comprises 251 residues: tRNA (guanine-N(1)-)-methyltransferase (251 aa).

Residues Gly-113 and 133 to 138 each bind S-adenosyl-L-methionine; that span reads IGDYVL.

The protein belongs to the RNA methyltransferase TrmD family. Homodimer.

It localises to the cytoplasm. It carries out the reaction guanosine(37) in tRNA + S-adenosyl-L-methionine = N(1)-methylguanosine(37) in tRNA + S-adenosyl-L-homocysteine + H(+). Specifically methylates guanosine-37 in various tRNAs. The polypeptide is tRNA (guanine-N(1)-)-methyltransferase (Pectobacterium atrosepticum (strain SCRI 1043 / ATCC BAA-672) (Erwinia carotovora subsp. atroseptica)).